The sequence spans 137 residues: uncharacterized protein (137 aa).

The signal sequence occupies residues 1 to 21 (MFNRRVLFLSVFSCAVFMLSG). Cysteine 22 carries the N-palmitoyl cysteine lipid modification. Residue cysteine 22 is the site of S-diacylglycerol cysteine attachment.

Its subcellular location is the membrane. This is an uncharacterized protein from Escherichia coli (strain K12).